We begin with the raw amino-acid sequence, 128 residues long: Fluoride-specific ion channel FluC (128 aa).

Transmembrane regions (helical) follow at residues 7–27, 37–57, 73–93, and 96–116; these read LAIG…AGLV, FGTL…IGAI, TGMM…FFLF, and ALYI…IILA. Residues Gly77 and Thr80 each contribute to the Na(+) site.

This sequence belongs to the fluoride channel Fluc/FEX (TC 1.A.43) family.

The protein resides in the cell inner membrane. It carries out the reaction fluoride(in) = fluoride(out). Na(+) is not transported, but it plays an essential structural role and its presence is essential for fluoride channel function. Its function is as follows. Fluoride-specific ion channel. Important for reducing fluoride concentration in the cell, thus reducing its toxicity. The polypeptide is Fluoride-specific ion channel FluC (Nautilia profundicola (strain ATCC BAA-1463 / DSM 18972 / AmH)).